Here is a 403-residue protein sequence, read N- to C-terminus: Phosphoglycerate kinase (403 aa).

Residues 22–24 (DLN), Arg37, 60–63 (HLGR), Arg119, and Arg156 each bind substrate. Residues Lys206, Gly302, Glu333, and 359 to 362 (GGDS) each bind ATP.

This sequence belongs to the phosphoglycerate kinase family. Monomer.

It is found in the cytoplasm. It carries out the reaction (2R)-3-phosphoglycerate + ATP = (2R)-3-phospho-glyceroyl phosphate + ADP. It functions in the pathway carbohydrate degradation; glycolysis; pyruvate from D-glyceraldehyde 3-phosphate: step 2/5. This chain is Phosphoglycerate kinase, found in Streptomyces avermitilis (strain ATCC 31267 / DSM 46492 / JCM 5070 / NBRC 14893 / NCIMB 12804 / NRRL 8165 / MA-4680).